We begin with the raw amino-acid sequence, 169 residues long: Non-specific lipid transfer protein GPI-anchored 11 (169 aa).

A signal peptide spans 1–23 (MAYATILMIFSVVALMSGERAHA). 4 cysteine pairs are disulfide-bonded: Cys27/Cys70, Cys37/Cys54, Cys55/Cys95, and Cys68/Cys105. Ser146 is lipidated: GPI-anchor amidated serine. Residues 147 to 169 (SDASLLSVSFAFVIFMALISSFY) constitute a propeptide, removed in mature form.

The protein belongs to the plant LTP family. In terms of tissue distribution, expressed in a vascular-specific manner, mainly in roots, and, to a lower extent, in hypocotyls, seedlings stems and flowers.

The protein resides in the cell membrane. The protein localises to the secreted. Probable lipid transfer protein. Proteoglycan-like factor that exhibits xylogen activity consisting in mediating local and inductive cell-cell interactions required for xylem differentiation. This chain is Non-specific lipid transfer protein GPI-anchored 11, found in Arabidopsis thaliana (Mouse-ear cress).